The chain runs to 876 residues: Alanine--tRNA ligase (876 aa).

Residues histidine 565, histidine 569, cysteine 667, and histidine 671 each contribute to the Zn(2+) site.

The protein belongs to the class-II aminoacyl-tRNA synthetase family. The cofactor is Zn(2+).

It localises to the cytoplasm. It carries out the reaction tRNA(Ala) + L-alanine + ATP = L-alanyl-tRNA(Ala) + AMP + diphosphate. In terms of biological role, catalyzes the attachment of alanine to tRNA(Ala) in a two-step reaction: alanine is first activated by ATP to form Ala-AMP and then transferred to the acceptor end of tRNA(Ala). Also edits incorrectly charged Ser-tRNA(Ala) and Gly-tRNA(Ala) via its editing domain. The protein is Alanine--tRNA ligase of Staphylococcus epidermidis (strain ATCC 35984 / DSM 28319 / BCRC 17069 / CCUG 31568 / BM 3577 / RP62A).